The primary structure comprises 544 residues: Protein RDR1 (544 aa).

Residues 14 to 40 (CETCRELKRKCDGNQPCGACVRFEYDC) constitute a DNA-binding region (zn(2)-C6 fungal-type). Positions 50-71 (KRRKTVEQDKEAPLPSPPVHVD) are disordered.

The protein resides in the nucleus. Its function is as follows. May act as a transcriptional repressor of multidrug resistance genes. This chain is Protein RDR1 (RDR1), found in Gibberella zeae (strain ATCC MYA-4620 / CBS 123657 / FGSC 9075 / NRRL 31084 / PH-1) (Wheat head blight fungus).